Here is a 796-residue protein sequence, read N- to C-terminus: Probable phosphoketolase (796 aa).

This sequence belongs to the XFP family. Thiamine diphosphate is required as a cofactor.

This Clostridium acetobutylicum (strain ATCC 824 / DSM 792 / JCM 1419 / IAM 19013 / LMG 5710 / NBRC 13948 / NRRL B-527 / VKM B-1787 / 2291 / W) protein is Probable phosphoketolase.